Reading from the N-terminus, the 406-residue chain is S-adenosylmethionine synthase (406 aa).

Residue His17 participates in ATP binding. Asp19 contacts Mg(2+). K(+) is bound at residue Glu45. The L-methionine site is built by Glu58 and Gln101. Residues 101-111 are flexible loop; that stretch reads QSAEINQGVAR. Residues 178 to 180, Asp258, 264 to 265, Ala281, and Lys285 each bind ATP; these read DGK and RK. Asp258 contacts L-methionine. Lys289 is an L-methionine binding site.

The protein belongs to the AdoMet synthase family. As to quaternary structure, homotetramer; dimer of dimers. Requires Mg(2+) as cofactor. The cofactor is K(+).

The protein resides in the cytoplasm. It carries out the reaction L-methionine + ATP + H2O = S-adenosyl-L-methionine + phosphate + diphosphate. It participates in amino-acid biosynthesis; S-adenosyl-L-methionine biosynthesis; S-adenosyl-L-methionine from L-methionine: step 1/1. In terms of biological role, catalyzes the formation of S-adenosylmethionine (AdoMet) from methionine and ATP. The overall synthetic reaction is composed of two sequential steps, AdoMet formation and the subsequent tripolyphosphate hydrolysis which occurs prior to release of AdoMet from the enzyme. This Bifidobacterium longum subsp. infantis (strain ATCC 15697 / DSM 20088 / JCM 1222 / NCTC 11817 / S12) protein is S-adenosylmethionine synthase.